Consider the following 502-residue polypeptide: Serine carboxypeptidase-like 40 (502 aa).

An N-terminal signal peptide occupies residues 1-24 (MRKGQGYSYSVIASVLVLLCVVVS). N-linked (GlcNAc...) asparagine glycosylation is found at N103 and N187. 3 disulfides stabilise this stretch: C136/C384, C293/C307, and C331/C352. The active site involves S229. 2 N-linked (GlcNAc...) asparagine glycosylation sites follow: N333 and N373. D420 is an active-site residue. A glycan (N-linked (GlcNAc...) asparagine) is linked at N436. H473 is an active-site residue.

Belongs to the peptidase S10 family. In terms of tissue distribution, expressed in roots, leaves, flowers and siliques.

Its subcellular location is the secreted. Probable carboxypeptidase. This chain is Serine carboxypeptidase-like 40 (SCPL40), found in Arabidopsis thaliana (Mouse-ear cress).